Reading from the N-terminus, the 259-residue chain is MALPDFNIRQLLEAGVHFGHQTQRWNPRMAPYIYGDRNGIHIMDLTQTVPMLDQALQAVRDTVAKGGRVLFVGTKRQAQKPIAEAAERCAQYYMNHRWLGGTLTNWKTVSNSIGRLKSIDEAMEGGFEGLTKKERLGMERDQGKLQASLGGIREMGGVPDLIFVIDVKKEDLAIAEANKLGIPVVAVVDTNCSPDGVDYVIPGNDDAARAIALYCDLVARAALDGMSAQLGAAGVDLGALEEGGVEEALAEEAAAPAES.

This sequence belongs to the universal ribosomal protein uS2 family.

In Dinoroseobacter shibae (strain DSM 16493 / NCIMB 14021 / DFL 12), this protein is Small ribosomal subunit protein uS2.